Reading from the N-terminus, the 615-residue chain is DNA mismatch repair protein MutL (615 aa).

Residues 370–397 form a disordered region; sequence EPVAPRYTPAPASGSRPAAPWPNTQPGY. Residues 378–391 show a composition bias toward low complexity; that stretch reads PAPASGSRPAAPWP.

Belongs to the DNA mismatch repair MutL/HexB family.

This protein is involved in the repair of mismatches in DNA. It is required for dam-dependent methyl-directed DNA mismatch repair. May act as a 'molecular matchmaker', a protein that promotes the formation of a stable complex between two or more DNA-binding proteins in an ATP-dependent manner without itself being part of a final effector complex. This Shigella dysenteriae serotype 1 (strain Sd197) protein is DNA mismatch repair protein MutL.